The following is a 519-amino-acid chain: Galactan beta-1,4-galactosyltransferase GALS2 (519 aa).

Residues 28 to 48 (LALMALLVLCTLATLLPFLPS) traverse the membrane as a helical segment. A GT92 domain is found at 257-471 (DYLYCGSSLY…YHGSISQRRE (215 aa)).

It belongs to the glycosyltransferase 92 family. In terms of tissue distribution, expressed in the midrib of mature leaves, root vasculature, flower filaments, siliques and seeds.

It is found in the golgi apparatus membrane. Functionally, involved in the biosynthesis of beta-1,4-galactan. Beta-1,4-galactans are abundant polysaccharides in plant cell walls and are found as side-chain of rhamnogalacturonan I, which is a major component of pectin. This chain is Galactan beta-1,4-galactosyltransferase GALS2, found in Arabidopsis thaliana (Mouse-ear cress).